The sequence spans 298 residues: Small ribosomal subunit protein uS3m (298 aa).

This sequence belongs to the universal ribosomal protein uS3 family.

It is found in the mitochondrion. The polypeptide is Small ribosomal subunit protein uS3m (RPS3) (Acanthamoeba castellanii (Amoeba)).